A 437-amino-acid polypeptide reads, in one-letter code: Epsilon-sarcoglycan (437 aa).

Over 1–317 the chain is Extracellular; that stretch reads MLLFWWWELG…LKSRDYYTDF (317 aa). The N-linked (GlcNAc...) asparagine glycan is linked to Asn-200. The helical transmembrane segment at 318 to 338 threads the bilayer; that stretch reads LVTLAVPSAVALVLFLILAYI. Residues 339–437 are Cytoplasmic-facing; it reads MCCRREGVEK…QQQTTGKWYP (99 aa).

This sequence belongs to the sarcoglycan alpha/epsilon family. Post-translationally, N-glycosylated. Ubiquitinated, leading to its degradation by the proteasome. As to expression, in both neural tissues including cerebellar cortex, striatum, cerebral cortex, thalamus and hippocampus, and non-neural tissues including quadriceps muscle, liver, kidney, spleen, lung, testis and heart. Widely distributed in the brain, with a robust signal obtained from regions with dense neuronal packing such as the pyramidal cell layer of the hippocampus, cerebellar molecular layer, and cerebral cortex. Levels are highest in kidney, moderate in brain and lung, and low in skeletal muscle, liver, spleen and testis.

It is found in the cell membrane. It localises to the sarcolemma. The protein resides in the cytoplasm. The protein localises to the cytoskeleton. Its subcellular location is the cell projection. It is found in the dendrite. It localises to the golgi apparatus. Component of the sarcoglycan complex, a subcomplex of the dystrophin-glycoprotein complex which forms a link between the F-actin cytoskeleton and the extracellular matrix. The sequence is that of Epsilon-sarcoglycan from Rattus norvegicus (Rat).